A 390-amino-acid chain; its full sequence is Deoxyhypusine synthase-like protein (390 aa).

It belongs to the deoxyhypusine synthase family.

The polypeptide is Deoxyhypusine synthase-like protein (Nostoc punctiforme (strain ATCC 29133 / PCC 73102)).